The primary structure comprises 667 residues: Probable export ATP-binding/permease protein MacB (667 aa).

The 239-residue stretch at 22–260 folds into the ABC transporter domain; it reads LRLAGVSRRF…PVEEVQPAAE (239 aa). 58-65 is a binding site for ATP; that stretch reads GASGSGKS. A run of 4 helical transmembrane segments spans residues 292–312, 540–560, 601–621, and 630–650; these read LLTM…SAIG, LTLL…IGVM, IGGV…ALFV, and LGSI…FGFV.

The protein belongs to the ABC transporter superfamily. Macrolide exporter (TC 3.A.1.122) family. As to quaternary structure, probably part of a tripartite efflux system, which is composed of an inner membrane transporter, a periplasmic membrane fusion protein, and an outer membrane component.

The protein localises to the cell inner membrane. Functionally, probably part of a tripartite efflux system. The protein is Probable export ATP-binding/permease protein MacB of Pseudomonas entomophila (strain L48).